The primary structure comprises 73 residues: Conotoxin im23b (73 aa).

The signal sequence occupies residues 1 to 22; the sequence is MIMRMTLTLFVLVVMTAASASG. Residues 23-28 constitute a propeptide that is removed on maturation; the sequence is DALTEA. 3 cysteine pairs are disulfide-bonded: C34/C41, C45/C55, and C56/C71.

Belongs to the conotoxin K superfamily. Expressed by the venom duct.

The protein resides in the secreted. Its function is as follows. Neurotoxin that induces excitatory symptoms in mice following intracranial administration. No symptoms are observed after intraperitoneal and intravenous (tail vein) injections. The protein is Conotoxin im23b of Conus imperialis (Imperial cone).